A 546-amino-acid chain; its full sequence is Putative inactive G-type lectin S-receptor-like serine/threonine-protein kinase SRK (546 aa).

Residues 1 to 31 form the signal peptide; the sequence is MRGELPNKHHSYTFFVFLFFFLILFPDLSIS. Residues 32–441 are Extracellular-facing; the sequence is VNTLSATESL…FGERRTIRGK (410 aa). One can recognise a Bulb-type lectin domain in the interval 34–154; sequence TLSATESLTI…KINESDEFLW (121 aa). Residues Asn46, Asn120, Asn147, and Asn243 are each glycosylated (N-linked (GlcNAc...) asparagine). Residues 293–329 form the EGF-like; atypical domain; that stretch reads PKDTCDLYGICGPYAYCDMSTSPTCNCIKGFQPLSPQ. 4 disulfides stabilise this stretch: Cys297/Cys309, Cys303/Cys317, Cys378/Cys403, and Cys382/Cys388. One can recognise a PAN domain in the interval 348–428; sequence CGEDRFFRLM…DGQDLFVRLA (81 aa). An N-linked (GlcNAc...) asparagine glycan is attached at Asn387. The chain crosses the membrane as a helical span at residues 442–462; the sequence is IIGLIIGISLMLVLSFIIYCF. Over 463-546 the chain is Cytoplasmic; the sequence is WKKKQKRARA…IVYKGRLLDG (84 aa). The Protein kinase domain maps to 524-546; that stretch reads FSDSNILGRGGFGIVYKGRLLDG. 530–538 is an ATP binding site; that stretch reads LGRGGFGIV.

Belongs to the protein kinase superfamily. Ser/Thr protein kinase family.

It localises to the cell membrane. Its function is as follows. Truncated and inactivated form of SRK, the female specificity determinant of self-incompatibility when active. Most A.thaliana cultivars contain such an inactive form and thus, are self-fertiles. The protein is Putative inactive G-type lectin S-receptor-like serine/threonine-protein kinase SRK (PSEUDOSRKA) of Arabidopsis thaliana (Mouse-ear cress).